The chain runs to 363 residues: Elongation factor Tu, chloroplastic (363 aa).

The tr-type G domain occupies 1–189; that stretch reads TLTAAITMAL…NVDEYIPTPE (189 aa). GTP-binding positions include 55-59 and 110-113; these read DCPGH and NKED.

The protein belongs to the TRAFAC class translation factor GTPase superfamily. Classic translation factor GTPase family. EF-Tu/EF-1A subfamily.

The protein localises to the plastid. Its subcellular location is the chloroplast. The enzyme catalyses GTP + H2O = GDP + phosphate + H(+). In terms of biological role, GTP hydrolase that promotes the GTP-dependent binding of aminoacyl-tRNA to the A-site of ribosomes during protein biosynthesis. This Gymnochlora stellata protein is Elongation factor Tu, chloroplastic (tufA).